The chain runs to 545 residues: Glucose-6-phosphate isomerase (545 aa).

Glu-351 acts as the Proton donor in catalysis. Catalysis depends on residues His-382 and Lys-510.

It belongs to the GPI family.

Its subcellular location is the cytoplasm. It catalyses the reaction alpha-D-glucose 6-phosphate = beta-D-fructose 6-phosphate. Its pathway is carbohydrate biosynthesis; gluconeogenesis. The protein operates within carbohydrate degradation; glycolysis; D-glyceraldehyde 3-phosphate and glycerone phosphate from D-glucose: step 2/4. Catalyzes the reversible isomerization of glucose-6-phosphate to fructose-6-phosphate. The chain is Glucose-6-phosphate isomerase from Shewanella baltica (strain OS155 / ATCC BAA-1091).